We begin with the raw amino-acid sequence, 610 residues long: Butyryl-CoA dehydrogenase Swol_2052 (610 aa).

Catalysis depends on Glu-451, which acts as the Proton acceptor.

The protein belongs to the acyl-CoA dehydrogenase family. FAD serves as cofactor.

It is found in the cytoplasm. It carries out the reaction butanoyl-CoA + oxidized [electron-transfer flavoprotein] + H(+) = (2E)-butenoyl-CoA + reduced [electron-transfer flavoprotein]. The catalysed reaction is a short-chain 2,3-saturated fatty acyl-CoA + oxidized [electron-transfer flavoprotein] + H(+) = a short-chain (2E)-enoyl-CoA + reduced [electron-transfer flavoprotein]. It functions in the pathway lipid metabolism; butanoate metabolism. Involved in syntrophic growth of S.wolfei with butyrate, as part of the butyrate oxidation pathway. Catalyzes the oxidation of butanoyl-CoA to crotonyl-CoA. Probably passes the electrons released by this reaction on to electron-transfer flavoproteins (EtfAB) to finally generate hydrogen and/or formate. This is Butyryl-CoA dehydrogenase Swol_2052 from Syntrophomonas wolfei subsp. wolfei (strain DSM 2245B / Goettingen).